A 459-amino-acid polypeptide reads, in one-letter code: Cysteine--tRNA ligase (459 aa).

C28 is a binding site for Zn(2+). The 'HIGH' region motif lies at 30–40; it reads ITVYDLCHVGH. Residues C209, H234, and E238 each contribute to the Zn(2+) site. Residues 266-270 carry the 'KMSKS' region motif; that stretch reads KMSKS. K269 is a binding site for ATP.

Belongs to the class-I aminoacyl-tRNA synthetase family. In terms of assembly, monomer. Zn(2+) serves as cofactor.

The protein localises to the cytoplasm. The enzyme catalyses tRNA(Cys) + L-cysteine + ATP = L-cysteinyl-tRNA(Cys) + AMP + diphosphate. The protein is Cysteine--tRNA ligase (cysS) of Pasteurella multocida (strain Pm70).